We begin with the raw amino-acid sequence, 231 residues long: Large ribosomal subunit protein uL1 (231 aa).

It belongs to the universal ribosomal protein uL1 family. In terms of assembly, part of the 50S ribosomal subunit.

Binds directly to 23S rRNA. The L1 stalk is quite mobile in the ribosome, and is involved in E site tRNA release. In terms of biological role, protein L1 is also a translational repressor protein, it controls the translation of the L11 operon by binding to its mRNA. This Staphylococcus haemolyticus (strain JCSC1435) protein is Large ribosomal subunit protein uL1.